Reading from the N-terminus, the 85-residue chain is U4-theraphotoxin-Hhn1h (85 aa).

Residues 1-22 (MKVTLIAILTCAAVLVLHTTAA) form the signal peptide. The propeptide occupies 23-48 (EELEAESQLMEVGMPDTELAAVDEER). 3 disulfides stabilise this stretch: cysteine 52–cysteine 66, cysteine 56–cysteine 77, and cysteine 71–cysteine 82.

It belongs to the neurotoxin 12 (Hwtx-2) family. 02 (Hwtx-2) subfamily. In terms of tissue distribution, expressed by the venom gland.

Its subcellular location is the secreted. In terms of biological role, postsynaptic neurotoxin. The polypeptide is U4-theraphotoxin-Hhn1h (Cyriopagopus hainanus (Chinese bird spider)).